The following is a 481-amino-acid chain: 6-phosphogluconate dehydrogenase, decarboxylating (481 aa).

Residues 11-16 (GLAVMG), 34-36 (NRT), 76-78 (VKA), and Asn104 each bind NADP(+). Substrate-binding positions include Asn104 and 130–132 (SGG). The active-site Proton acceptor is the Lys184. 187–188 (HN) is a binding site for substrate. Glu191 serves as the catalytic Proton donor. The substrate site is built by Tyr192, Lys259, Arg286, Arg445, and His451.

It belongs to the 6-phosphogluconate dehydrogenase family. As to quaternary structure, homodimer.

The catalysed reaction is 6-phospho-D-gluconate + NADP(+) = D-ribulose 5-phosphate + CO2 + NADPH. It participates in carbohydrate degradation; pentose phosphate pathway; D-ribulose 5-phosphate from D-glucose 6-phosphate (oxidative stage): step 3/3. Catalyzes the oxidative decarboxylation of 6-phosphogluconate to ribulose 5-phosphate and CO(2), with concomitant reduction of NADP to NADPH. In Drosophila melanogaster (Fruit fly), this protein is 6-phosphogluconate dehydrogenase, decarboxylating (Pgd).